Here is a 74-residue protein sequence, read N- to C-terminus: Conotoxin Vt11.7 (74 aa).

Residues 1–26 form the signal peptide; sequence MMFRLTSVGCFLLVIVLLNVAVLTNA. Cystine bridges form between C28-C42, C35-C47, C41-C51, and C46-C55. Residues 62–74 constitute a propeptide that is removed on maturation; sequence AHGHGLLRFWGQR.

This sequence belongs to the conotoxin I2 superfamily. Expressed by the venom duct.

The protein localises to the secreted. This Conus planorbis (Planorbis cone) protein is Conotoxin Vt11.7.